The sequence spans 210 residues: MLGNKNISMAVIRRLPKYHRYLGDLLDRDIQRISSKELSDIIGFTASQIRQDLNNFGGFGQQGYGYNVEALHTEIGKILGLDRPYNAVLVGAGNLGQAIANYAGFRKAGFEIKALFDANPRMIGLKIREFEVLDSDTLEDFIKNNNIDIAVLCIPKNGAQEVINRVVKAGIKGVWNFAPLDLEVPKGVIVENVNLTESLFTLSYLMKEGK.

A DNA-binding region (H-T-H motif) is located at residues 17–56; that stretch reads KYHRYLGDLLDRDIQRISSKELSDIIGFTASQIRQDLNNF. 91–96 contributes to the NAD(+) binding site; it reads GAGNLG.

It belongs to the transcriptional regulatory Rex family. Homodimer.

Its subcellular location is the cytoplasm. Its function is as follows. Modulates transcription in response to changes in cellular NADH/NAD(+) redox state. This is Redox-sensing transcriptional repressor Rex from Clostridioides difficile (strain 630) (Peptoclostridium difficile).